A 1097-amino-acid polypeptide reads, in one-letter code: DNA-directed RNA polymerase subunit beta (1097 aa).

The tract at residues 1072–1097 is disordered; sequence QDINPRRNTPSRPTYESLGTSEYEED. The segment covering 1077–1091 has biased composition (polar residues); sequence RRNTPSRPTYESLGT.

Belongs to the RNA polymerase beta chain family. In terms of assembly, in cyanobacteria the RNAP catalytic core is composed of 2 alpha, 1 beta, 1 beta', 1 gamma and 1 omega subunit. When a sigma factor is associated with the core the holoenzyme is formed, which can initiate transcription.

The catalysed reaction is RNA(n) + a ribonucleoside 5'-triphosphate = RNA(n+1) + diphosphate. Functionally, DNA-dependent RNA polymerase catalyzes the transcription of DNA into RNA using the four ribonucleoside triphosphates as substrates. This is DNA-directed RNA polymerase subunit beta from Prochlorococcus marinus (strain AS9601).